We begin with the raw amino-acid sequence, 34 residues long: MSDIN-like toxin proprotein 7 (34 aa).

The propeptide occupies 1-10 (MSDINATRLP). The segment at residues 11 to 17 (AWLTDCP) is a cross-link (cyclopeptide (Ala-Pro)). Residues 18 to 34 (CVGDDVNRLLTRGESLC) constitute a propeptide that is removed on maturation.

Belongs to the MSDIN fungal toxin family. Processed by the macrocyclase-peptidase enzyme POPB to yield a toxic cyclic heptapeptide. POPB first removes 10 residues from the N-terminus. Conformational trapping of the remaining peptide forces the enzyme to release this intermediate rather than proceed to macrocyclization. The enzyme rebinds the remaining peptide in a different conformation and catalyzes macrocyclization of the N-terminal 7 residues. In terms of tissue distribution, expressed in basidiocarps.

Its function is as follows. Probable toxin that belongs to the MSDIN-like toxin family responsible for a large number of food poisoning cases and deaths. This chain is MSDIN-like toxin proprotein 7, found in Amanita exitialis (Guangzhou destroying angel).